Reading from the N-terminus, the 955-residue chain is Leucine--tRNA ligase (955 aa).

The 'HIGH' region signature appears at 66 to 77 (PYPSGSGLHVGH). Positions 725–729 (KMGKS) match the 'KMSKS' region motif. K728 is a binding site for ATP.

This sequence belongs to the class-I aminoacyl-tRNA synthetase family.

The protein localises to the cytoplasm. It catalyses the reaction tRNA(Leu) + L-leucine + ATP = L-leucyl-tRNA(Leu) + AMP + diphosphate. In Saccharopolyspora erythraea (strain ATCC 11635 / DSM 40517 / JCM 4748 / NBRC 13426 / NCIMB 8594 / NRRL 2338), this protein is Leucine--tRNA ligase.